Reading from the N-terminus, the 114-residue chain is Iron-sulfur cluster insertion protein ErpA (114 aa).

Iron-sulfur cluster contacts are provided by cysteine 42, cysteine 106, and cysteine 108.

The protein belongs to the HesB/IscA family. In terms of assembly, homodimer. It depends on iron-sulfur cluster as a cofactor.

Its function is as follows. Required for insertion of 4Fe-4S clusters for at least IspG. The chain is Iron-sulfur cluster insertion protein ErpA from Haemophilus influenzae (strain PittEE).